A 513-amino-acid chain; its full sequence is Mannan endo-1,4-beta-mannosidase A and B (513 aa).

An N-terminal signal peptide occupies residues 1 to 26 (MKVYKKVAFVMAFIMFFSVLPTISMS). A GH26 domain is found at 41 to 353 (QTTKNVYSWL…FNDSWVVNRG (313 aa)). Residue H132 participates in substrate binding. The active-site Proton donor is E195. Substrate is bound by residues W200 and Y270. Catalysis depends on E295, which acts as the Nucleophile. 429–430 (IK) serves as a coordination point for substrate.

This sequence belongs to the glycosyl hydrolase 26 family.

Its subcellular location is the secreted. The enzyme catalyses Random hydrolysis of (1-&gt;4)-beta-D-mannosidic linkages in mannans, galactomannans and glucomannans.. Functionally, could be involved in the degradation of glucomannan and catalyzes the endo hydrolysis of beta-1,4-linked mannan, galactomannan and glucomannan. In Caldalkalibacillus mannanilyticus (strain DSM 16130 / CIP 109019 / JCM 10596 / AM-001) (Bacillus mannanilyticus), this protein is Mannan endo-1,4-beta-mannosidase A and B.